Here is a 115-residue protein sequence, read N- to C-terminus: NADH-ubiquinone oxidoreductase chain 3 (115 aa).

3 consecutive transmembrane segments (helical) span residues 3 to 23 (VMLT…IAFW), 55 to 75 (FFLV…LLPL), and 84 to 104 (LTTM…SLAY).

The protein belongs to the complex I subunit 3 family. Core subunit of respiratory chain NADH dehydrogenase (Complex I) which is composed of 45 different subunits. Interacts with TMEM186. Interacts with TMEM242.

It is found in the mitochondrion inner membrane. It catalyses the reaction a ubiquinone + NADH + 5 H(+)(in) = a ubiquinol + NAD(+) + 4 H(+)(out). In terms of biological role, core subunit of the mitochondrial membrane respiratory chain NADH dehydrogenase (Complex I) which catalyzes electron transfer from NADH through the respiratory chain, using ubiquinone as an electron acceptor. Essential for the catalytic activity of complex I. The protein is NADH-ubiquinone oxidoreductase chain 3 of Canis lupus familiaris (Dog).